A 175-amino-acid polypeptide reads, in one-letter code: Large ribosomal subunit protein bL17 (175 aa).

Residues 124-175 are disordered; it reads VKKSKPTAPAQAVATKPAVEETREAAAAQPQEPEVEISEVKDPAEECEAKAD. Residues 161–175 show a composition bias toward basic and acidic residues; that stretch reads SEVKDPAEECEAKAD.

The protein belongs to the bacterial ribosomal protein bL17 family. In terms of assembly, part of the 50S ribosomal subunit. Contacts protein L32.

This chain is Large ribosomal subunit protein bL17, found in Geobacter sulfurreducens (strain ATCC 51573 / DSM 12127 / PCA).